The chain runs to 300 residues: 4-hydroxy-tetrahydrodipicolinate synthase (300 aa).

Threonine 46 lines the pyruvate pocket. Tyrosine 135 serves as the catalytic Proton donor/acceptor. Lysine 163 (schiff-base intermediate with substrate) is an active-site residue. Valine 205 lines the pyruvate pocket.

The protein belongs to the DapA family. As to quaternary structure, homotetramer; dimer of dimers.

It is found in the cytoplasm. It carries out the reaction L-aspartate 4-semialdehyde + pyruvate = (2S,4S)-4-hydroxy-2,3,4,5-tetrahydrodipicolinate + H2O + H(+). It functions in the pathway amino-acid biosynthesis; L-lysine biosynthesis via DAP pathway; (S)-tetrahydrodipicolinate from L-aspartate: step 3/4. In terms of biological role, catalyzes the condensation of (S)-aspartate-beta-semialdehyde [(S)-ASA] and pyruvate to 4-hydroxy-tetrahydrodipicolinate (HTPA). This is 4-hydroxy-tetrahydrodipicolinate synthase from Koribacter versatilis (strain Ellin345).